Consider the following 123-residue polypeptide: MLPVAVVLVVFAVAVTSAESIHQVNPLPRRRRLKGTEEKGHHTNVNDEERVISLESASDLISKLKVKINAKLLAGDSAKPATLSKAQVASVAKEVVKEVKKTPKVWPPPMIKKGVRRGAGGVR.

A signal peptide spans 1–18; that stretch reads MLPVAVVLVVFAVAVTSA. Residues 24-46 are disordered; the sequence is VNPLPRRRRLKGTEEKGHHTNVN. The RxLR-dEER motif lies at 30–50; the sequence is RRRLKGTEEKGHHTNVNDEER. Over residues 34–46 the composition is skewed to basic and acidic residues; that stretch reads KGTEEKGHHTNVN. The interval 60–82 is biP-binding; sequence LISKLKVKINAKLLAGDSAKPAT.

This sequence belongs to the RxLR effector family. Interacts with host plant ER-luminal binding immunoglobulin proteins (BiPs) such as soybean BiP1, BiP2, BiP3 and BiP4.

It localises to the secreted. It is found in the host endoplasmic reticulum. In terms of biological role, effector that suppresses plant defense responses during the early stages of pathogen infection. Suppresses cell death induced by effectors and PAMPs in plant hosts. Avh262 stabilizes endoplasmic reticulum (ER)-luminal binding immunoglobulin proteins (BiPs), which act as negative regulators of plant resistance to Phytophthora. By stabilizing BiPs, Avh262 suppresses ER stress-triggered cell death and facilitates Phytophthora infection. The protein is RxLR effector protein Avh262 of Phytophthora sojae (Soybean stem and root rot agent).